We begin with the raw amino-acid sequence, 1465 residues long: DNA polymerase III PolC-type (1465 aa).

Residues 427 to 583 enclose the Exonuclease domain; sequence YVVFDVETTG…YDAEATGRLL (157 aa).

The protein belongs to the DNA polymerase type-C family. PolC subfamily.

The protein resides in the cytoplasm. The catalysed reaction is DNA(n) + a 2'-deoxyribonucleoside 5'-triphosphate = DNA(n+1) + diphosphate. Required for replicative DNA synthesis. This DNA polymerase also exhibits 3' to 5' exonuclease activity. The chain is DNA polymerase III PolC-type from Streptococcus pyogenes serotype M12 (strain MGAS2096).